We begin with the raw amino-acid sequence, 1802 residues long: MMVFQSFILGNLVSLCMKIINSVVVVGLYYGFLTTFSIGPSYLFLLRARVMDEGEEGTEKKVSATTGFIAGQLMMFISIYYAPLHLALGRPHTITVLALPYLLFHFFWNNHKHFFDYGSTTRNEMRNLRIQCVFLNNLIFQLFNHFILPSSMLARLVNIYMFRCNNKMLFVTSSFVGWLIGHILFMKWVGLVLVWIQQNNSIRSNVLIRSNKYKFLVSELRNSMARIFSILLFITCVYYLGRIPSPIFTKKLKGTSETGGTKQDQEVSTEEAPFPSLFSEEREDLDKIDEMEEIRVNGKDKINKDDEFHVRTYYNYKTVSENLDGNKENSNLEFFKIKKKEDHFLWFEKPFVTLVFDYKRWNRPNRYIKNEKIQNTVRNEMSQYFFYTCQSDGKERISFTYPPTLSTFFEMIQKNIPSFTREKTPSDQVSTYWRLINEEKKENLKKEFLNRIEALDKEWSVENILEKTTRFCHNETKKEYLPKIYDPFLHGVSRGRIKKLPQFQIITETYIKKNIEGSWINKIHGILMKMNSNKFEQTIEKFNIESLSIEKKLSFFSESQEEKINSEEEIKIFKFLFDVVITDSNDQTLIKNFMDFHEINKKVPRWSYKLISELEELEGENEENVTMEPGIRSRKAKRVVVFTDTEPHNEVYTKLKDLKDNQNSDQNDEMALIRYSHQSDFRRELIKGSMRSQRRKTVIWQFFQAKVHSPLFFDRIDKLFYFSFDIWGLKKEILRNFMWKNKKNQKIDKKDEEQSKIEEKRRIEISETWDSFLFAQIIRGYLLVTQSILRKYIILPLLIIIKNSVRMLLFQFPEWSEDLKDWKREMHVKCTYNGVQLSETEFPKNWLTDGIQIKILFPFYLKPWHKSKFQSFQKARLKKIKDKGEQNDFCFLTVWGMETELPFGSAQKKPSFFEPISKQLTKRIKKFKTKSFLVLRIFKERATIFLKVAKEIKNWFLKNFLFIKGKIKDLSKRNLISLFGPREIYELNETQKDSIMSNQMIHELSVQNKSMEWTNSSLSENKIKNLINRIKTISNQIEEISKEKQNLTNSCNKLRYDSKKMESSKKIWQTFKRKNTRLIRKSIFFVKFCIEQLSIAIFLGIINIPRITTQLFFESTKTILDKYIYKTEENGEKINNKKTTIYFISTIKNLISNSNKKKISYNLCSLSQAYVFYKISQIKVSHVSKFSKLKAVLEYNRCITSFFLKNQIKDFFQEQGIFHYKLKDKTLLNSEVNHWKNWLRSNYQYNLPQIAWARLGTQKWKKKINQDYLVLNPSLTNEDSYEKKKFDNYQKKSFFEADSLLNPKHNLKKDSIYNLFCYKSINSTEKIFDMSIGIARDNCLVSCFLEKYNIRGIGEIRHRKYLDWRILNFWVTKKVNSEPWVDTKNKKKYINTKVQNYQRIDKITKTGLANKKRNFFDWMGMNEEILNHRRKNFEFFFFPEFFLFSSTYKMKPWVIPIKLLLLNFNENINVNKKITGKKKGFIPSNEKKSLRFFNLNKEEKESAGQVELESDKEKKINPESALSNHEKNIEENYEESTIKKRKNKKQYKSNTEAELDLFLTRYSRFQLRWNSFFNQKILNNVKVYCLLVRLKNPNEIAISSIERGEMSLDILMIEKNFTFAKLMKKGILIIEPVRLSVQNDGQRIIYRTIGISLVHKNKHKINKRYKKKSYIEKKTIEKSITKYQNKTVNRKKNHYDFFVPENILSPKRRREFRILICFNLKKKNARDRNSRFNKNIQNLTTVLDTKKDLAKDKNNLIKFKSFLWPNFRLEDLACMNRYWFNTTNGNHFSMIRIHMYTRFPIH.

6 helical membrane-spanning segments follow: residues 19 to 39 (IINS…FSIG), 68 to 88 (FIAG…HLAL), 91 to 111 (PHTI…WNNH), 133 to 153 (VFLN…SSML), 176 to 196 (VGWL…LVWI), and 227 to 247 (IFSI…PSPI).

It belongs to the TIC214 family. In terms of assembly, part of the Tic complex.

The protein resides in the plastid. It localises to the chloroplast inner membrane. Involved in protein precursor import into chloroplasts. May be part of an intermediate translocation complex acting as a protein-conducting channel at the inner envelope. This chain is Protein TIC 214, found in Nasturtium officinale (Watercress).